A 244-amino-acid chain; its full sequence is Krueppel-like factor 9 (244 aa).

Disordered stretches follow at residues 24-51 (VPEHGGAPDAERLRLPEREVTKEHGDPG) and 80-142 (SVCS…SEKR). Residues 32-51 (DAERLRLPEREVTKEHGDPG) are compositionally biased toward basic and acidic residues. Phosphoserine is present on S122. C2H2-type zinc fingers lie at residues 143-167 (HKCPYSGCGKVYGKSSHLKAHYRVH), 173-197 (FPCTWPDCLKKFSRSDELTRHYRTH), and 203-225 (FRCPLCEKRFMRSDHLTKHARRH).

Belongs to the Sp1 C2H2-type zinc-finger protein family. Interacts with ZZEF1.

The protein localises to the nucleus. Its function is as follows. Transcription factor that binds to GC box promoter elements. Selectively activates mRNA synthesis from genes containing tandem repeats of GC boxes but represses genes with a single GC box. Acts as an epidermal circadian transcription factor regulating keratinocyte proliferation. The polypeptide is Krueppel-like factor 9 (KLF9) (Sus scrofa (Pig)).